The chain runs to 211 residues: Redox-sensing transcriptional repressor Rex (211 aa).

A DNA-binding region (H-T-H motif) is located at residues 18–57; it reads LYYRFLKNLHASGKQRVSSAELSEAVKVDSATIRRDFSYF. NAD(+) is bound at residue 92 to 97; the sequence is GVGNLG.

This sequence belongs to the transcriptional regulatory Rex family. As to quaternary structure, homodimer.

Its subcellular location is the cytoplasm. In terms of biological role, modulates transcription in response to changes in cellular NADH/NAD(+) redox state. The polypeptide is Redox-sensing transcriptional repressor Rex (Anoxybacillus flavithermus (strain DSM 21510 / WK1)).